The following is a 183-amino-acid chain: Large ribosomal subunit protein uL6 (183 aa).

It belongs to the universal ribosomal protein uL6 family. In terms of assembly, part of the 50S ribosomal subunit.

Functionally, this protein binds to the 23S rRNA, and is important in its secondary structure. It is located near the subunit interface in the base of the L7/L12 stalk, and near the tRNA binding site of the peptidyltransferase center. This chain is Large ribosomal subunit protein uL6, found in Ruminiclostridium cellulolyticum (strain ATCC 35319 / DSM 5812 / JCM 6584 / H10) (Clostridium cellulolyticum).